The following is a 377-amino-acid chain: MRVLVLGAGQLARMMSLAGAPLNIETIAFDVGSENIVHPLTQTVLGHGLEQAIEQVDVITAEFEHIPHPILDLCARSGKLYPSAEAIKAGGDRRLEKALLDRAQVANARYTMIRSRDDLTSAIAEIGLPMVLKSALGGYDGKGQWRLKEPTQIESVWQELAQYLAANPEQAIVAEEFVAFDREVSLVGARNLVGDVVVYPLAENVHTQGVLSLSTAIDAPALQTQAKAMFKAVAEQLNYVGVLALEFFEVQGQLLVNEIAPRVHNSGHWTQQGAETCQFENHLRAVCGLPLGSTKLVRETAMINILGEDQLPAEVLALEGCHVHWYGKAKRSGRKMGHINVTADYSGELQRKLCQLATVLDEKAFPAVHAVAKEIQP.

Residues Arg-93, Lys-133, Gly-138–Gln-144, Glu-175–Val-178, Glu-183, His-206, and Asn-257–Glu-258 each bind ATP. The region spanning Lys-97–Cys-287 is the ATP-grasp domain.

It belongs to the PurK/PurT family. In terms of assembly, homodimer.

The enzyme catalyses 5-amino-1-(5-phospho-beta-D-ribosyl)imidazole + hydrogencarbonate + ATP = 5-carboxyamino-1-(5-phospho-D-ribosyl)imidazole + ADP + phosphate + 2 H(+). The protein operates within purine metabolism; IMP biosynthesis via de novo pathway; 5-amino-1-(5-phospho-D-ribosyl)imidazole-4-carboxylate from 5-amino-1-(5-phospho-D-ribosyl)imidazole (N5-CAIR route): step 1/2. In terms of biological role, catalyzes the ATP-dependent conversion of 5-aminoimidazole ribonucleotide (AIR) and HCO(3)(-) to N5-carboxyaminoimidazole ribonucleotide (N5-CAIR). The chain is N5-carboxyaminoimidazole ribonucleotide synthase from Vibrio cholerae serotype O1 (strain ATCC 39315 / El Tor Inaba N16961).